A 427-amino-acid chain; its full sequence is Glutamate-1-semialdehyde 2,1-aminomutase (427 aa).

Lys264 bears the N6-(pyridoxal phosphate)lysine mark.

The protein belongs to the class-III pyridoxal-phosphate-dependent aminotransferase family. HemL subfamily. In terms of assembly, homodimer. Pyridoxal 5'-phosphate serves as cofactor.

It is found in the cytoplasm. It catalyses the reaction (S)-4-amino-5-oxopentanoate = 5-aminolevulinate. The protein operates within porphyrin-containing compound metabolism; protoporphyrin-IX biosynthesis; 5-aminolevulinate from L-glutamyl-tRNA(Glu): step 2/2. In Clostridium botulinum (strain Eklund 17B / Type B), this protein is Glutamate-1-semialdehyde 2,1-aminomutase.